We begin with the raw amino-acid sequence, 318 residues long: MAEALVLVEHTEGALKKVSAELITAARVLGEPAAVVVGTPGTSAPLVDGLKTAGAAKIYVAESDAADKYLITPVVDVLAALAESSAPAAVLLAATADGKEIGGRLAARIGSGLLVDVVDVREGAVGVHSVFGGVFIVEAQANGDTPVITVRAGAVEAQPAEGAGEQVSVEVPAPAENATKITARAPAVVDNRPDLTEATVVVSGGRGVGSADNFSVVEALADSLGAAVGASRAAVDSGYYPGQFQIGQTGKTVSPQLYIALGISGAIQHRAGMQTSKTIVAVNKDEEAPIFEIADFGVVGDLFKVAPQLTDGIKARKG.

257–285 (LYIALGISGAIQHRAGMQTSKTIVAVNKD) is an FAD binding site.

The protein belongs to the ETF alpha-subunit/FixB family. Heterodimer of an alpha and a beta subunit. The cofactor is FAD.

Its function is as follows. The electron transfer flavoprotein serves as a specific electron acceptor for other dehydrogenases. It transfers the electrons to the main respiratory chain via ETF-ubiquinone oxidoreductase (ETF dehydrogenase). The protein is Electron transfer flavoprotein subunit alpha (etfA) of Mycobacterium leprae (strain TN).